An 83-amino-acid chain; its full sequence is Late seed maturation protein P8B6 (83 aa).

Basic and acidic residues-rich tracts occupy residues 1 to 18 (MASQQEKKQLDERAKKGE) and 37 to 51 (AEGRSRGGNTRKEQL). The segment at 1–83 (MASQQEKKQL…DAEDEPSTRT (83 aa)) is disordered. A compositionally biased stretch (acidic residues) spans 73–83 (EDAEDEPSTRT).

This sequence belongs to the small hydrophilic plant seed protein family.

The protein localises to the cytoplasm. This protein may play a role in equipping the seed for survival, maintaining a minimal level of hydration in the dry organism and preventing the denaturation of cytoplasmic components, or may play a role during imbibition by controlling water uptake. The sequence is that of Late seed maturation protein P8B6 from Raphanus sativus (Radish).